Reading from the N-terminus, the 129-residue chain is Glycine cleavage system H protein (129 aa).

The 83-residue stretch at Leu-24–Lys-106 folds into the Lipoyl-binding domain. The residue at position 65 (Lys-65) is an N6-lipoyllysine.

It belongs to the GcvH family. In terms of assembly, the glycine cleavage system is composed of four proteins: P, T, L and H. It depends on (R)-lipoate as a cofactor.

Its function is as follows. The glycine cleavage system catalyzes the degradation of glycine. The H protein shuttles the methylamine group of glycine from the P protein to the T protein. The polypeptide is Glycine cleavage system H protein (Prochlorococcus marinus subsp. pastoris (strain CCMP1986 / NIES-2087 / MED4)).